A 746-amino-acid chain; its full sequence is NAD(P)H-quinone oxidoreductase subunit 5, chloroplastic (746 aa).

16 helical membrane passes run 9-29 (WIIP…LLLF), 40-60 (WTFL…YLSI), 89-109 (IDPL…LVLI), 125-145 (FAYM…SNLI), 147-167 (VYFF…FWFT), 185-205 (GDFG…SFEF), 221-241 (VNLL…IAKS), 258-278 (TPIS…FLVA), 280-300 (LLPL…IGII), 327-347 (LGYM…FHLI), 354-374 (ALLF…VGYS), 396-416 (TAFL…CFWS), 425-445 (LLFS…TAFY), 547-567 (ILFP…IGIP), 608-628 (FSVS…KPFY), and 723-743 (YLFL…FFYF).

It belongs to the complex I subunit 5 family. As to quaternary structure, NDH is composed of at least 16 different subunits, 5 of which are encoded in the nucleus.

It is found in the plastid. The protein resides in the chloroplast thylakoid membrane. The enzyme catalyses a plastoquinone + NADH + (n+1) H(+)(in) = a plastoquinol + NAD(+) + n H(+)(out). It carries out the reaction a plastoquinone + NADPH + (n+1) H(+)(in) = a plastoquinol + NADP(+) + n H(+)(out). NDH shuttles electrons from NAD(P)H:plastoquinone, via FMN and iron-sulfur (Fe-S) centers, to quinones in the photosynthetic chain and possibly in a chloroplast respiratory chain. The immediate electron acceptor for the enzyme in this species is believed to be plastoquinone. Couples the redox reaction to proton translocation, and thus conserves the redox energy in a proton gradient. The chain is NAD(P)H-quinone oxidoreductase subunit 5, chloroplastic (ndhF) from Arabidopsis thaliana (Mouse-ear cress).